We begin with the raw amino-acid sequence, 914 residues long: Chlorate reductase subunit alpha (914 aa).

A signal peptide (tat-type signal) is located at residues 1–32; it reads MNSPDEHNGRRRFLQFSAAALASAAASPSLWA. The 4Fe-4S Mo/W bis-MGD-type domain occupies 62–125; sequence DSVGVMTHSN…VYCSWSKQPD (64 aa). Positions 69, 73, 77, and 111 each coordinate [4Fe-4S] cluster. Mo-bis(molybdopterin guanine dinucleotide) is bound at residue Asp-205.

It belongs to the prokaryotic molybdopterin-containing oxidoreductase family. As to quaternary structure, heterotrimer of alpha, beta and gamma subunits. [4Fe-4S] cluster serves as cofactor. Requires Mo-bis(molybdopterin guanine dinucleotide) as cofactor. Predicted to be exported by the Tat system. The position of the signal peptide cleavage has not been experimentally proven.

The protein localises to the periplasm. It catalyses the reaction chlorate + AH2 = chlorite + A + H2O. Terminal reductase that allows anaerobic growth on chlorate as the sole respiratory oxidant. This chain is Chlorate reductase subunit alpha (clrA), found in Ideonella dechloratans.